Here is a 344-residue protein sequence, read N- to C-terminus: Phenylalanine--tRNA ligase alpha subunit (344 aa).

Residue E256 participates in Mg(2+) binding.

This sequence belongs to the class-II aminoacyl-tRNA synthetase family. Phe-tRNA synthetase alpha subunit type 1 subfamily. In terms of assembly, tetramer of two alpha and two beta subunits. Mg(2+) is required as a cofactor.

Its subcellular location is the cytoplasm. The catalysed reaction is tRNA(Phe) + L-phenylalanine + ATP = L-phenylalanyl-tRNA(Phe) + AMP + diphosphate + H(+). This Halalkalibacterium halodurans (strain ATCC BAA-125 / DSM 18197 / FERM 7344 / JCM 9153 / C-125) (Bacillus halodurans) protein is Phenylalanine--tRNA ligase alpha subunit (pheS).